The primary structure comprises 193 residues: Thymidylate kinase (193 aa).

7–14 is an ATP binding site; that stretch reads GIDGCGKS.

Belongs to the thymidylate kinase family.

It carries out the reaction dTMP + ATP = dTDP + ADP. Phosphorylation of dTMP to form dTDP in both de novo and salvage pathways of dTTP synthesis. This chain is Thymidylate kinase, found in Coprothermobacter proteolyticus (strain ATCC 35245 / DSM 5265 / OCM 4 / BT).